A 442-amino-acid polypeptide reads, in one-letter code: Putative helicase 161L (442 aa).

One can recognise a Helicase ATP-binding domain in the interval 88 to 241 (IDILEKNHSV…LFPIFFGKEK (154 aa)). Position 101–108 (101–108 (CFTGFGKT)) interacts with ATP. A DEAH box motif is present at residues 194-197 (DEVH).

It belongs to the DEAD box helicase family. DEAH subfamily.

The protein is Putative helicase 161L of Invertebrate iridescent virus 6 (IIV-6).